The primary structure comprises 352 residues: MSDRRAALESALRQIEKQFGKGSIMKLGEVSNIQISTASSGALALDIALGVGGFPRGRIVEIYGPESSGKTTVALHAIAEVQRQGGQAAFIDAEHALDPVYAAKLGVNIDELLLSQPDTGEQALEIAEALVRSGAVDIIVVDSVAALVPKAEIEGEMGDSHVGLQARLMSQALRKLSGAINKSKTIAIFINQLREKVGVMFGNPETTPGGRALKFYASVRLDVRKAESIKVGNDILGSKTKIKVVKNKVAPPFKVAEVDIMYGEGISREGSILDIGSEIDVVQKSGAWYSFNEERLGQGRENSKVFLKENPHIASQIETKVREYFSLNPSSVPEAEAEHDPEQDEEPTFDLE.

Glycine 64–threonine 71 is an ATP binding site. A disordered region spans residues asparagine 328–glutamate 352. Residues alanine 335–glutamate 352 are compositionally biased toward acidic residues.

This sequence belongs to the RecA family.

It is found in the cytoplasm. Can catalyze the hydrolysis of ATP in the presence of single-stranded DNA, the ATP-dependent uptake of single-stranded DNA by duplex DNA, and the ATP-dependent hybridization of homologous single-stranded DNAs. It interacts with LexA causing its activation and leading to its autocatalytic cleavage. In Brevibacillus brevis (strain 47 / JCM 6285 / NBRC 100599), this protein is Protein RecA.